The following is a 906-amino-acid chain: MAPAPSPTPLPLFLLLLLLVGVAPLAAAQGQNIQTRFPSTRTPAFATPPPITSPSPSPGTPTATPSSSPPSSSGKRSDIAVAVVSTALSSFAVSGLAFFLFLRHGKKRELTEAGGAGQHYGGAQGGALTGKRPEREPKRPARGNMVDENGLDAIYWREFEKEGDGGRGRKPPASRRPPQPPPPRPYRAERRQDAHESSAPSPPRSRKNRIDQEPLIPRGSLDSASAEFDESLYAPSAGSTSSFSVAAAEAYARPPSTPAITAVSSVPRSSPSPAPAPAARPASPSPSLPLPPGRESPSRPQSIAAAAVASPAPPPPPPPKPAAAAPPPPPPPKAAPPPPPPKGPPPPPPAKGPPPPPPPKGPSPPPPPPPGGKKGGPPPPPPKGGASRPPAAPGVPTGSADQQAKLKPLHWDKVNVAATDHSMVWDNITGGSFNLDEGIIEALFGTAAVNRKTKPADSKDASGGSTSAGLGRSNSPEQIFLLEPRKSHNISIILRSLTVGREEIIDALLNGHTELSTEVLEKLSRLNISKEEENTLLKFSGNPDRLAPAEFFLLRLLLDVPSPFARVNALLFKANYAAEVAQLKQSLRTLEMASQELRTKGLFFKLLEAVLKAGNRMNAGTARGNAQAFNLTALRKLSDVKSTDGSTTLLHFVIEEVVRSEGKRLAINRNYSLRRSGSLAKSTDGGNPAASSTSQGPSREERQNEYLNLGLPIVGGLSTEFANVKKAALVDYDTVVNECAILGNRLAGTKKLLETYGDDGFARGLRGFVKAAEQELNELKGNQEKVLELVQRTTEYYHTGATKDKNAHPLQLFIIVRDFLGMVDQACVDIKRKLQQQKKPTPPPSSSQPAAPAATTKGAADDAPAPAQKPPEEVDSKRKRVMPRFPNLPAHFMKDNADSDSSSDEE.

Positions 1 to 28 are cleaved as a signal peptide; it reads MAPAPSPTPLPLFLLLLLLVGVAPLAAA. The segment at 34–76 is disordered; sequence QTRFPSTRTPAFATPPPITSPSPSPGTPTATPSSSPPSSSGKR. A compositionally biased stretch (pro residues) spans 46–59; that stretch reads ATPPPITSPSPSPG. The span at 60–73 shows a compositional bias: low complexity; that stretch reads TPTATPSSSPPSSS. The chain crosses the membrane as a helical span at residues 81 to 101; sequence VAVVSTALSSFAVSGLAFFLF. Disordered regions lie at residues 113-149, 161-223, 250-404, 451-474, 677-702, and 834-906; these read AGGAGQHYGGAQGGALTGKRPEREPKRPARGNMVDEN, KEGD…SLDS, AYAR…DQQA, RKTKPADSKDASGGSTSAGLGRSN, GSLAKSTDGGNPAASSTSQGPSREER, and LQQQ…SDEE. Positions 114 to 128 are enriched in gly residues; sequence GGAGQHYGGAQGGAL. Positions 174-185 are enriched in pro residues; the sequence is SRRPPQPPPPRP. The span at 186-196 shows a compositional bias: basic and acidic residues; that stretch reads YRAERRQDAHE. Over residues 270 to 294 the composition is skewed to pro residues; it reads SPSPAPAPAARPASPSPSLPLPPGR. Residues 295–310 are compositionally biased toward low complexity; it reads ESPSRPQSIAAAAVAS. Over residues 311–383 the composition is skewed to pro residues; sequence PAPPPPPPPK…KGGPPPPPPK (73 aa). An FH2 domain is found at 396-849; that stretch reads PTGSADQQAK…PTPPPSSSQP (454 aa). 2 stretches are compositionally biased toward polar residues: residues 463-474 and 677-697; these read GGSTSAGLGRSN and GSLAKSTDGGNPAASSTSQGP. Residues 847–866 show a composition bias toward low complexity; that stretch reads SQPAAPAATTKGAADDAPAP.

This sequence belongs to the formin-like family. Class-I subfamily.

It localises to the membrane. This Oryza sativa subsp. japonica (Rice) protein is Formin-like protein 16 (FH16).